The chain runs to 114 residues: Hydrogenase maturation factor HypA (114 aa).

His-2 contributes to the Ni(2+) binding site. Positions 73, 76, 89, and 92 each coordinate Zn(2+).

The protein belongs to the HypA/HybF family.

Involved in the maturation of [NiFe] hydrogenases. Required for nickel insertion into the metal center of the hydrogenase. The sequence is that of Hydrogenase maturation factor HypA from Syntrophus aciditrophicus (strain SB).